Here is a 504-residue protein sequence, read N- to C-terminus: Ribosomal protein uS12 methylthiotransferase RimO (504 aa).

The 117-residue stretch at 19–135 (KKVGFVSLGC…ILAASGIEPR (117 aa)) folds into the MTTase N-terminal domain. [4Fe-4S] cluster contacts are provided by C28, C64, C98, C214, C218, and C221. Positions 200–430 (ATPKYMAYIK…MSLQKQISKK (231 aa)) constitute a Radical SAM core domain. Residues 433–504 (KALIGREFDV…HDYDLVARLL (72 aa)) form the TRAM domain.

This sequence belongs to the methylthiotransferase family. RimO subfamily. [4Fe-4S] cluster serves as cofactor.

Its subcellular location is the cytoplasm. It catalyses the reaction L-aspartate(89)-[ribosomal protein uS12]-hydrogen + (sulfur carrier)-SH + AH2 + 2 S-adenosyl-L-methionine = 3-methylsulfanyl-L-aspartate(89)-[ribosomal protein uS12]-hydrogen + (sulfur carrier)-H + 5'-deoxyadenosine + L-methionine + A + S-adenosyl-L-homocysteine + 2 H(+). In terms of biological role, catalyzes the methylthiolation of an aspartic acid residue of ribosomal protein uS12. The sequence is that of Ribosomal protein uS12 methylthiotransferase RimO from Koribacter versatilis (strain Ellin345).